Consider the following 312-residue polypeptide: Glyoxylate/hydroxypyruvate reductase A (312 aa).

Arg-227 is an active-site residue. The active-site Proton donor is the His-275.

The protein belongs to the D-isomer specific 2-hydroxyacid dehydrogenase family. GhrA subfamily.

It localises to the cytoplasm. The catalysed reaction is glycolate + NADP(+) = glyoxylate + NADPH + H(+). The enzyme catalyses (R)-glycerate + NAD(+) = 3-hydroxypyruvate + NADH + H(+). It carries out the reaction (R)-glycerate + NADP(+) = 3-hydroxypyruvate + NADPH + H(+). In terms of biological role, catalyzes the NADPH-dependent reduction of glyoxylate and hydroxypyruvate into glycolate and glycerate, respectively. In Salmonella paratyphi B (strain ATCC BAA-1250 / SPB7), this protein is Glyoxylate/hydroxypyruvate reductase A.